The sequence spans 369 residues: Glutamate 5-kinase (369 aa).

ATP is bound at residue lysine 14. Substrate is bound by residues serine 54, aspartate 141, and asparagine 153. Residues 173-174 and 215-221 contribute to the ATP site; these read SD and TGGMVTK. Residues 277-355 enclose the PUA domain; it reads RGRLHLDPGA…SELATALGPA (79 aa).

It belongs to the glutamate 5-kinase family.

The protein localises to the cytoplasm. It catalyses the reaction L-glutamate + ATP = L-glutamyl 5-phosphate + ADP. Its pathway is amino-acid biosynthesis; L-proline biosynthesis; L-glutamate 5-semialdehyde from L-glutamate: step 1/2. Catalyzes the transfer of a phosphate group to glutamate to form L-glutamate 5-phosphate. The polypeptide is Glutamate 5-kinase (Salinispora arenicola (strain CNS-205)).